A 181-amino-acid chain; its full sequence is Caltractin ICL1a (181 aa).

The disordered stretch occupies residues Met-1–Phe-29. Positions Pro-14 to Lys-23 are enriched in low complexity. EF-hand domains are found at residues Glu-37–Glu-72, Ala-73–Glu-108, Asp-110–Thr-145, and Met-146–Ala-181. Ca(2+) is bound by residues Asp-50, Asp-52, Thr-54, Ser-56, Glu-61, Asp-86, Asp-88, Ser-90, Gln-92, and Glu-97.

It belongs to the centrin family. In terms of assembly, monomer.

It is found in the cytoplasm. The protein resides in the cytoskeleton. In terms of biological role, plays a fundamental role in microtubule organizing center structure and function. Component of the infraciliary lattice (ICL) and the ciliary basal bodies. The polypeptide is Caltractin ICL1a (Icl1a) (Paramecium tetraurelia).